The primary structure comprises 245 residues: MKMKQISDTTLKITISLEDLMDRGMEIADFLVPQEKTEEFFYAILDELEMPDSFLDTGMLSFRVTPKPDKVDVFVTKSKIDQNLDFEDLSDLPDMEELAQMSPDEFIKTLEKSIADKTKDDIEAIQSLEQVEAKEEEQEQAEQEAESKKEPYIYYILSFAKLADLVAFAKTVTFEMETSELYKMNERYYLTILVDIENHPSPYPAWLLARMREFADDSDISRSVLQEYGQVLMSHDAVLNLQKIG.

Belongs to the MecA family. In terms of assembly, homodimer.

In terms of biological role, enables the recognition and targeting of unfolded and aggregated proteins to the ClpC protease or to other proteins involved in proteolysis. The sequence is that of Adapter protein MecA from Streptococcus pneumoniae (strain ATCC BAA-255 / R6).